Here is a 316-residue protein sequence, read N- to C-terminus: Olfactory receptor 8J1 (316 aa).

The Extracellular portion of the chain corresponds to 1–25 (MAPENFTRVTEFILTGVSSCPELQI). An N-linked (GlcNAc...) asparagine glycan is attached at Asn5. The helical transmembrane segment at 26 to 46 (PLFLVFLVLYGLTMAGNLGII) threads the bilayer. Residues 47–54 (TLTSVDSR) lie on the Cytoplasmic side of the membrane. Residues 55–75 (LQTPMYFFLQHLALINLGNST) form a helical membrane-spanning segment. Topologically, residues 76 to 99 (VIAPKMLINFLVKKKTTSFYECAT) are extracellular. Cys97 and Cys189 are joined by a disulfide. The chain crosses the membrane as a helical span at residues 100-120 (QLGGFLFFIVSEVIMLALMAY). The Cytoplasmic portion of the chain corresponds to 121–139 (DRYVAICNPLLYMVVVSRR). Residues 140 to 160 (LCLLLVSLTYLYGFSTAIVVS) form a helical membrane-spanning segment. At 161–197 (SYVFSVSYCSSNIINHFYCDNVPLLALSCSDTYLPET) the chain is on the extracellular side. The helical transmembrane segment at 198–217 (VVFISAATNVVGSLIIVLVS) threads the bilayer. The Cytoplasmic portion of the chain corresponds to 218 to 237 (YFNIVLSILKICSSEGRKKA). Residues 238–258 (FSTCASHMMAVTIFYGTLLFM) traverse the membrane as a helical segment. The Extracellular portion of the chain corresponds to 259-272 (YVQPRSNHSLDTDD). A helical transmembrane segment spans residues 273-293 (KMASVFYTLVIPMLNPLIYSL). The Cytoplasmic portion of the chain corresponds to 294-316 (RNKDVKTALQRFMTNLCYSFKTM).

This sequence belongs to the G-protein coupled receptor 1 family.

The protein resides in the cell membrane. Its function is as follows. Odorant receptor. In Homo sapiens (Human), this protein is Olfactory receptor 8J1 (OR8J1).